The primary structure comprises 246 residues: Ribosomal RNA small subunit methyltransferase J (246 aa).

Residues 115–116 and Asp169 contribute to the S-adenosyl-L-methionine site; that span reads ER.

The protein belongs to the methyltransferase superfamily. RsmJ family.

Its subcellular location is the cytoplasm. It carries out the reaction guanosine(1516) in 16S rRNA + S-adenosyl-L-methionine = N(2)-methylguanosine(1516) in 16S rRNA + S-adenosyl-L-homocysteine + H(+). Its function is as follows. Specifically methylates the guanosine in position 1516 of 16S rRNA. In Buchnera aphidicola subsp. Acyrthosiphon pisum (strain APS) (Acyrthosiphon pisum symbiotic bacterium), this protein is Ribosomal RNA small subunit methyltransferase J.